The primary structure comprises 376 residues: Dual-specificity RNA methyltransferase RlmN (376 aa).

Residue E96 is the Proton acceptor of the active site. Positions 102–341 constitute a Radical SAM core domain; that stretch reads DEDRATLCVS…VVVRKTRGDD (240 aa). A disulfide bond links C109 and C346. [4Fe-4S] cluster is bound by residues C116, C120, and C123. S-adenosyl-L-methionine-binding positions include 170–171, S202, 224–226, and N303; these read GE and SLH. Catalysis depends on C346, which acts as the S-methylcysteine intermediate.

This sequence belongs to the radical SAM superfamily. RlmN family. It depends on [4Fe-4S] cluster as a cofactor.

Its subcellular location is the cytoplasm. It catalyses the reaction adenosine(2503) in 23S rRNA + 2 reduced [2Fe-2S]-[ferredoxin] + 2 S-adenosyl-L-methionine = 2-methyladenosine(2503) in 23S rRNA + 5'-deoxyadenosine + L-methionine + 2 oxidized [2Fe-2S]-[ferredoxin] + S-adenosyl-L-homocysteine. The catalysed reaction is adenosine(37) in tRNA + 2 reduced [2Fe-2S]-[ferredoxin] + 2 S-adenosyl-L-methionine = 2-methyladenosine(37) in tRNA + 5'-deoxyadenosine + L-methionine + 2 oxidized [2Fe-2S]-[ferredoxin] + S-adenosyl-L-homocysteine. Specifically methylates position 2 of adenine 2503 in 23S rRNA and position 2 of adenine 37 in tRNAs. m2A2503 modification seems to play a crucial role in the proofreading step occurring at the peptidyl transferase center and thus would serve to optimize ribosomal fidelity. The polypeptide is Dual-specificity RNA methyltransferase RlmN (Pseudoalteromonas atlantica (strain T6c / ATCC BAA-1087)).